The chain runs to 295 residues: Ectoine dioxygenase (295 aa).

Glutamine 129 lines the L-ectoine pocket. Residue lysine 135 coordinates 2-oxoglutarate. Residues histidine 146, aspartate 148, and histidine 247 each contribute to the Fe cation site.

Belongs to the PhyH family. EctD subfamily. As to quaternary structure, homodimer. Fe(2+) is required as a cofactor.

The enzyme catalyses L-ectoine + 2-oxoglutarate + O2 = 5-hydroxyectoine + succinate + CO2. Its function is as follows. Involved in the biosynthesis of 5-hydroxyectoine, called compatible solute, which helps organisms to survive extreme osmotic stress by acting as a highly soluble organic osmolyte. Catalyzes the 2-oxoglutarate-dependent selective hydroxylation of L-ectoine to yield (4S,5S)-5-hydroxyectoine. The polypeptide is Ectoine dioxygenase (Streptomyces avermitilis (strain ATCC 31267 / DSM 46492 / JCM 5070 / NBRC 14893 / NCIMB 12804 / NRRL 8165 / MA-4680)).